A 433-amino-acid polypeptide reads, in one-letter code: Succinate--CoA ligase [GDP-forming] subunit beta, mitochondrial (433 aa).

The transit peptide at 1–38 (IPAAPVAAQARKLLRDLAFRPPLLAARSQVVQLTPRRW) directs the protein to the mitochondrion. The 229-residue stretch at 47 to 275 (KKLMSDNGVK…NAEFRQKDIF (229 aa)) folds into the ATP-grasp domain. Gln58 lines the GTP pocket. Position 74 is an N6-acetyllysine (Lys74). Lys79 is subject to N6-succinyllysine. 91–93 (GRG) serves as a coordination point for GTP. N6-acetyllysine occurs at positions 133 and 140. Leu147 is a GTP binding site. Ser162 is modified (phosphoserine). N6-acetyllysine occurs at positions 201 and 228. The Mg(2+) site is built by Asn244 and Asp258. N6-acetyllysine occurs at positions 272 and 292. Asn309 provides a ligand contact to substrate. The residue at position 339 (Lys339) is an N6-succinyllysine. An N6-acetyllysine modification is found at Lys348. 366 to 368 (GIV) provides a ligand contact to substrate. N6-acetyllysine is present on residues Lys387 and Lys424.

The protein belongs to the succinate/malate CoA ligase beta subunit family. GTP-specific subunit beta subfamily. In terms of assembly, heterodimer of an alpha and a beta subunit. The beta subunit determines specificity for GTP. The cofactor is Mg(2+).

Its subcellular location is the mitochondrion. The enzyme catalyses GTP + succinate + CoA = succinyl-CoA + GDP + phosphate. It participates in carbohydrate metabolism; tricarboxylic acid cycle; succinate from succinyl-CoA (ligase route): step 1/1. In terms of biological role, GTP-specific succinyl-CoA synthetase functions in the citric acid cycle (TCA), coupling the hydrolysis of succinyl-CoA to the synthesis of GTP and thus represents the only step of substrate-level phosphorylation in the TCA. The beta subunit provides nucleotide specificity of the enzyme and binds the substrate succinate, while the binding sites for coenzyme A and phosphate are found in the alpha subunit. The protein is Succinate--CoA ligase [GDP-forming] subunit beta, mitochondrial of Sus scrofa (Pig).